A 247-amino-acid polypeptide reads, in one-letter code: Phosphoribosylaminoimidazole-succinocarboxamide synthase (247 aa).

This sequence belongs to the SAICAR synthetase family.

The enzyme catalyses 5-amino-1-(5-phospho-D-ribosyl)imidazole-4-carboxylate + L-aspartate + ATP = (2S)-2-[5-amino-1-(5-phospho-beta-D-ribosyl)imidazole-4-carboxamido]succinate + ADP + phosphate + 2 H(+). It participates in purine metabolism; IMP biosynthesis via de novo pathway; 5-amino-1-(5-phospho-D-ribosyl)imidazole-4-carboxamide from 5-amino-1-(5-phospho-D-ribosyl)imidazole-4-carboxylate: step 1/2. The chain is Phosphoribosylaminoimidazole-succinocarboxamide synthase from Gloeobacter violaceus (strain ATCC 29082 / PCC 7421).